Here is a 131-residue protein sequence, read N- to C-terminus: MRHYELVLLVHPDQSDQVVGMVERYIKLVQDNNGTIHRLEDWGRRQLAYPINKIHKAHYVLFNIETDGETLAELEELFRYNDAIIRSLVMRRDDAVTEESQLAKNADEKRARKATTRRPDSNDDNDNHSDD.

Positions 94–131 are disordered; that stretch reads DAVTEESQLAKNADEKRARKATTRRPDSNDDNDNHSDD. Over residues 117 to 131 the composition is skewed to basic and acidic residues; that stretch reads RRPDSNDDNDNHSDD.

This sequence belongs to the bacterial ribosomal protein bS6 family.

Its function is as follows. Binds together with bS18 to 16S ribosomal RNA. This Psychrobacter cryohalolentis (strain ATCC BAA-1226 / DSM 17306 / VKM B-2378 / K5) protein is Small ribosomal subunit protein bS6.